The chain runs to 223 residues: Putative N-acetylmannosamine-6-phosphate 2-epimerase (223 aa).

Belongs to the NanE family.

It catalyses the reaction an N-acyl-D-glucosamine 6-phosphate = an N-acyl-D-mannosamine 6-phosphate. It participates in amino-sugar metabolism; N-acetylneuraminate degradation; D-fructose 6-phosphate from N-acetylneuraminate: step 3/5. Converts N-acetylmannosamine-6-phosphate (ManNAc-6-P) to N-acetylglucosamine-6-phosphate (GlcNAc-6-P). The protein is Putative N-acetylmannosamine-6-phosphate 2-epimerase of Staphylococcus haemolyticus (strain JCSC1435).